A 42-amino-acid chain; its full sequence is MQDVKTYLSTAPVLATLWFGFLAGLLIEINRFFPDALVSPLF.

A helical transmembrane segment spans residues 7–27 (YLSTAPVLATLWFGFLAGLLI).

It belongs to the PsaJ family.

The protein localises to the plastid. The protein resides in the chloroplast thylakoid membrane. Functionally, may help in the organization of the PsaE and PsaF subunits. In Psilotum nudum (Whisk fern), this protein is Photosystem I reaction center subunit IX.